The following is a 212-amino-acid chain: Putative protein phosphatase 2C 53 (212 aa).

Residues 1-208 (MEDRFSAITN…DDISVMLIPL (208 aa)) enclose the PPM-type phosphatase domain. Residue Asp-199 participates in Mn(2+) binding.

The protein belongs to the PP2C family. It depends on Mg(2+) as a cofactor. Mn(2+) is required as a cofactor.

The catalysed reaction is O-phospho-L-seryl-[protein] + H2O = L-seryl-[protein] + phosphate. It catalyses the reaction O-phospho-L-threonyl-[protein] + H2O = L-threonyl-[protein] + phosphate. In Arabidopsis thaliana (Mouse-ear cress), this protein is Putative protein phosphatase 2C 53.